The following is an 81-amino-acid chain: Cytotoxin I-like T-15 (81 aa).

Positions 1 to 21 (MKTLLLTLVVVTIVCLDLGYT) are cleaved as a signal peptide. Cystine bridges form between C24/C42, C35/C59, C63/C74, and C75/C80.

Belongs to the three-finger toxin family. Short-chain subfamily. Type IA cytotoxin sub-subfamily. In terms of assembly, monomer in solution; Homodimer and oligomer in the presence of negatively charged lipids forming a pore with a size ranging between 20 and 30 Angstroms. As to expression, expressed by the venom gland.

The protein resides in the secreted. It is found in the target cell membrane. Its function is as follows. Shows cytolytic activity on many different cells by forming pore in lipid membranes. In vivo, increases heart rate or kills the animal by cardiac arrest. In addition, it binds to heparin with high affinity, interacts with Kv channel-interacting protein 1 (KCNIP1) in a calcium-independent manner, and binds to integrin alpha-V/beta-3 (ITGAV/ITGB3) with moderate affinity. The chain is Cytotoxin I-like T-15 from Naja atra (Chinese cobra).